The primary structure comprises 261 residues: Serine acetyltransferase (261 aa).

It belongs to the transferase hexapeptide repeat family.

The protein localises to the cytoplasm. It catalyses the reaction L-serine + acetyl-CoA = O-acetyl-L-serine + CoA. It functions in the pathway amino-acid biosynthesis; L-cysteine biosynthesis; L-cysteine from L-serine: step 1/2. The polypeptide is Serine acetyltransferase (cysE) (Buchnera aphidicola subsp. Schizaphis graminum (strain Sg)).